The chain runs to 316 residues: MSQNGIFPDILTATALVHMYSKSGNFERATEAFENLKSYGLRPDEKIYEAMILGYVNAGKPKLGERLMKEMQAKELKASEEVYMALLRAYAQMGDANGAAGISSSMQYASDGPLSFEAYSLFVEAYGKAGQVDKAKSNFDEMRKLGHKPDDKCIANLVRAYKGENSLDKALRLLLQLEKDGIEIGVITYTVLVDWMANLGLIEEAEQLLVKISQLGEAPPFELQVSLCCMYSGVRNEKKTLQALGVLEAKRDQMGPNEFDKVISALKRGGFEKDARRMYKYMEARKFLPSQRLQMDMVAPPRAFGSGSGRVRRFNS.

6 PPR repeats span residues 9 to 43, 44 to 78, 79 to 113, 115 to 149, 150 to 184, and 185 to 219; these read DILT…GLRP, DEKI…ELKA, SEEV…SDGP, SFEA…GHKP, DDKC…GIEI, and GVIT…GEAP.

Belongs to the PPR family. P subfamily.

The protein is Pentatricopeptide repeat-containing protein At1g19525 of Arabidopsis thaliana (Mouse-ear cress).